We begin with the raw amino-acid sequence, 128 residues long: Small ribosomal subunit protein uS11 (128 aa).

The protein belongs to the universal ribosomal protein uS11 family. In terms of assembly, part of the 30S ribosomal subunit. Interacts with proteins S7 and S18. Binds to IF-3.

Its function is as follows. Located on the platform of the 30S subunit, it bridges several disparate RNA helices of the 16S rRNA. Forms part of the Shine-Dalgarno cleft in the 70S ribosome. This is Small ribosomal subunit protein uS11 from Desulfosudis oleivorans (strain DSM 6200 / JCM 39069 / Hxd3) (Desulfococcus oleovorans).